The chain runs to 131 residues: Small ribosomal subunit protein uS11 (131 aa).

The protein belongs to the universal ribosomal protein uS11 family. In terms of assembly, part of the 30S ribosomal subunit. Interacts with proteins S7 and S18. Binds to IF-3.

Functionally, located on the platform of the 30S subunit, it bridges several disparate RNA helices of the 16S rRNA. Forms part of the Shine-Dalgarno cleft in the 70S ribosome. The sequence is that of Small ribosomal subunit protein uS11 from Deinococcus radiodurans (strain ATCC 13939 / DSM 20539 / JCM 16871 / CCUG 27074 / LMG 4051 / NBRC 15346 / NCIMB 9279 / VKM B-1422 / R1).